Here is a 761-residue protein sequence, read N- to C-terminus: BMP/retinoic acid-inducible neural-specific protein 1 (761 aa).

The N-terminal stretch at Met-1–Ser-19 is a signal peptide. The region spanning Arg-68–Met-251 is the MACPF domain. Residues Asn-156, Asn-433, Asn-443, Asn-553, Asn-599, Asn-631, and Asn-677 are each glycosylated (N-linked (GlcNAc...) asparagine).

This sequence belongs to the BRINP family. Highly expressed in brain. Weakly expressed in heart, lung, skeletal muscle, kidney, thymus, prostate, testis and small intestine.

The protein localises to the cytoplasm. Plays a role in neurogenesis and brain development. May suppress cell cycle progression in postmitotic neurons by inhibiting G1/S transition. In Homo sapiens (Human), this protein is BMP/retinoic acid-inducible neural-specific protein 1 (BRINP1).